A 519-amino-acid chain; its full sequence is Aldehyde dehydrogenase, mitochondrial (519 aa).

The transit peptide at 1 to 19 (MLRAALSTARRGPRLSRLL) directs the protein to the mitochondrion. Positions 12–26 (GPRLSRLLSAAATSA) match the SIFI-degron motif. Lysine 54, lysine 75, lysine 80, and lysine 161 each carry N6-acetyllysine. Position 264–269 (264–269 (GSTEVG)) interacts with NAD(+). The active-site Proton acceptor is the glutamate 287. Cysteine 321 acts as the Nucleophile in catalysis. Residues lysine 370, lysine 377, lysine 385, lysine 409, lysine 428, lysine 430, lysine 443, and lysine 453 each carry the N6-acetyllysine modification.

Belongs to the aldehyde dehydrogenase family. Homotetramer. Post-translationally, in response to mitochondrial stress, the precursor protein is ubiquitinated by the SIFI complex in the cytoplasm before mitochondrial import, leading to its degradation. Within the SIFI complex, UBR4 initiates ubiquitin chain that are further elongated or branched by KCMF1.

Its subcellular location is the mitochondrion matrix. It catalyses the reaction an aldehyde + NAD(+) + H2O = a carboxylate + NADH + 2 H(+). It participates in alcohol metabolism; ethanol degradation; acetate from ethanol: step 2/2. Functionally, required for clearance of cellular formaldehyde, a cytotoxic and carcinogenic metabolite that induces DNA damage. This chain is Aldehyde dehydrogenase, mitochondrial (Aldh2), found in Rattus norvegicus (Rat).